A 215-amino-acid chain; its full sequence is ATP-dependent dethiobiotin synthetase BioD (215 aa).

ATP is bound at residue 13–18; sequence DIGKTV. Threonine 17 is a Mg(2+) binding site. Lysine 38 is an active-site residue. Threonine 42 is a binding site for substrate. Residues aspartate 50, 115 to 118, and 175 to 176 contribute to the ATP site; these read EGAG and NH. The Mg(2+) site is built by aspartate 50 and glutamate 115.

The protein belongs to the dethiobiotin synthetase family. As to quaternary structure, homodimer. The cofactor is Mg(2+).

It localises to the cytoplasm. It catalyses the reaction (7R,8S)-7,8-diammoniononanoate + CO2 + ATP = (4R,5S)-dethiobiotin + ADP + phosphate + 3 H(+). The protein operates within cofactor biosynthesis; biotin biosynthesis; biotin from 7,8-diaminononanoate: step 1/2. Its function is as follows. Catalyzes a mechanistically unusual reaction, the ATP-dependent insertion of CO2 between the N7 and N8 nitrogen atoms of 7,8-diaminopelargonic acid (DAPA, also called 7,8-diammoniononanoate) to form a ureido ring. In Neisseria meningitidis serogroup C / serotype 2a (strain ATCC 700532 / DSM 15464 / FAM18), this protein is ATP-dependent dethiobiotin synthetase BioD.